Reading from the N-terminus, the 338-residue chain is Glycerol-3-phosphate dehydrogenase [NAD(P)+] (338 aa).

The NADPH site is built by Trp11, Arg30, and Lys107. Sn-glycerol 3-phosphate contacts are provided by Lys107, Gly140, and Ser142. Ala144 lines the NADPH pocket. Residues Lys195, Asp248, Ser258, Arg259, and Asn260 each contribute to the sn-glycerol 3-phosphate site. Residue Lys195 is the Proton acceptor of the active site. Arg259 serves as a coordination point for NADPH. Residues Val283 and Glu285 each coordinate NADPH.

It belongs to the NAD-dependent glycerol-3-phosphate dehydrogenase family.

The protein localises to the cytoplasm. It catalyses the reaction sn-glycerol 3-phosphate + NAD(+) = dihydroxyacetone phosphate + NADH + H(+). It carries out the reaction sn-glycerol 3-phosphate + NADP(+) = dihydroxyacetone phosphate + NADPH + H(+). Its pathway is membrane lipid metabolism; glycerophospholipid metabolism. Catalyzes the reduction of the glycolytic intermediate dihydroxyacetone phosphate (DHAP) to sn-glycerol 3-phosphate (G3P), the key precursor for phospholipid synthesis. The protein is Glycerol-3-phosphate dehydrogenase [NAD(P)+] of Ralstonia nicotianae (strain ATCC BAA-1114 / GMI1000) (Ralstonia solanacearum).